We begin with the raw amino-acid sequence, 135 residues long: uncharacterized protein (135 aa).

Residues 68-135 (DEVDNYIRVF…KKESEDEDEL (68 aa)) are a coiled coil. The segment at 88–135 (EKIVGKPPKSTSAPDIDELEEEPDEETEEKSEEKTEKKKKESEDEDEL) is disordered. Residues 102–117 (DIDELEEEPDEETEEK) are compositionally biased toward acidic residues. Residues 118 to 129 (SEEKTEKKKKES) are compositionally biased toward basic and acidic residues.

This is an uncharacterized protein from Acidianus hospitalis (AFV-1).